A 275-amino-acid chain; its full sequence is uncharacterized protein (275 aa).

Helical transmembrane passes span 25–45, 70–90, 107–127, 149–169, 203–223, and 247–267; these read LGYF…FMTA, LLFF…LSAI, IGNF…LRFV, FGQW…IVQF, IARA…AMTA, and ILSI…MKGI.

It is found in the cell membrane. This is an uncharacterized protein from Bacillus subtilis (strain 168).